Reading from the N-terminus, the 577-residue chain is Arginine--tRNA ligase (577 aa).

Positions 122 to 132 match the 'HIGH' region motif; it reads PNVAKEMHVGH.

The protein belongs to the class-I aminoacyl-tRNA synthetase family. In terms of assembly, monomer.

It localises to the cytoplasm. It catalyses the reaction tRNA(Arg) + L-arginine + ATP = L-arginyl-tRNA(Arg) + AMP + diphosphate. In Histophilus somni (strain 129Pt) (Haemophilus somnus), this protein is Arginine--tRNA ligase.